Reading from the N-terminus, the 440-residue chain is Ribosomal protein uS12 methylthiotransferase RimO (440 aa).

An MTTase N-terminal domain is found at 6 to 116 (PKVGFVSLGC…VVTAVHEVVP (111 aa)). [4Fe-4S] cluster contacts are provided by cysteine 15, cysteine 51, cysteine 80, cysteine 149, cysteine 153, and cysteine 156. Residues 135–373 (LTPRHYAYLK…MAHQQAISAA (239 aa)) form the Radical SAM core domain. Residues 376-440 (QLKVGKEIEV…DEYDLWAELV (65 aa)) form the TRAM domain.

This sequence belongs to the methylthiotransferase family. RimO subfamily. [4Fe-4S] cluster serves as cofactor.

The protein localises to the cytoplasm. The enzyme catalyses L-aspartate(89)-[ribosomal protein uS12]-hydrogen + (sulfur carrier)-SH + AH2 + 2 S-adenosyl-L-methionine = 3-methylsulfanyl-L-aspartate(89)-[ribosomal protein uS12]-hydrogen + (sulfur carrier)-H + 5'-deoxyadenosine + L-methionine + A + S-adenosyl-L-homocysteine + 2 H(+). Catalyzes the methylthiolation of an aspartic acid residue of ribosomal protein uS12. The sequence is that of Ribosomal protein uS12 methylthiotransferase RimO from Pseudomonas aeruginosa (strain UCBPP-PA14).